The following is an 872-amino-acid chain: Protein SEY1 (872 aa).

The Cytoplasmic portion of the chain corresponds to 1-749 (MVANGHFAGV…KRSAIGGITQ (749 aa)). In terms of domain architecture, GB1/RHD3-type G spans 49–307 (GFNYHLISVF…IPADGFAVYA (259 aa)). 59 to 66 (GSQSTGKS) serves as a coordination point for GTP. Positions 482–504 (SNYQQELSLYQKDLENIGGQLRR) form a coiled coil. Residues 676–704 (LDKWIGHTPSSATPADEEDLTPIGGVDED) are disordered. Acidic residues predominate over residues 690-704 (ADEEDLTPIGGVDED). A helical membrane pass occupies residues 750–770 (VPLYFYGLLLALGWNEIVAVL). Residues 771–773 (RNP) lie on the Lumenal side of the membrane. The helical transmembrane segment at 774 to 794 (AYFLLLFVCAVTAYVTYQLNL) threads the bilayer. The Cytoplasmic portion of the chain corresponds to 795–872 (WGPIIKMTEA…IDDADDDDDF (78 aa)). A disordered region spans residues 849–872 (NRKSAGGFQNNRSHIDDADDDDDF).

Belongs to the TRAFAC class dynamin-like GTPase superfamily. GB1/RHD3 GTPase family. RHD3 subfamily.

Its subcellular location is the endoplasmic reticulum membrane. Its function is as follows. Cooperates with the reticulon proteins and tubule-shaping DP1 family proteins to generate and maintain the structure of the tubular endoplasmic reticulum network. Has GTPase activity, which is required for its function in ER organization. This is Protein SEY1 from Paracoccidioides brasiliensis (strain Pb18).